The primary structure comprises 349 residues: Inositol 2-dehydrogenase (349 aa).

This sequence belongs to the Gfo/Idh/MocA family. Homotetramer.

It catalyses the reaction myo-inositol + NAD(+) = scyllo-inosose + NADH + H(+). Involved in the oxidation of myo-inositol (MI) to 2-keto-myo-inositol (2KMI or 2-inosose). In Mycolicibacterium gilvum (strain PYR-GCK) (Mycobacterium gilvum (strain PYR-GCK)), this protein is Inositol 2-dehydrogenase.